The chain runs to 248 residues: Murein peptide amidase A (248 aa).

Residues 3–245 (RYYSNNQEIT…DAFIALLQHD (243 aa)) form the Peptidase M14 domain. Zn(2+) is bound by residues His60, Glu63, and His168. The active-site Proton donor/acceptor is Glu221.

The protein belongs to the peptidase M14 family. Homodimer. Requires Zn(2+) as cofactor.

It localises to the cytoplasm. The enzyme catalyses L-alanyl-gamma-D-glutamyl-meso-2,6-diaminopimelate + H2O = L-alanyl-D-glutamate + meso-2,6-diaminopimelate. The protein operates within cell wall degradation; peptidoglycan degradation. Functionally, involved in muropeptide degradation. Catalyzes the hydrolysis of the gamma-D-glutamyl-diaminopimelic acid (gamma-D-Glu-Dap) amide bond in the murein tripeptide L-alanyl-gamma-D-glutamyl-meso-diaminopimelic acid, leading to the formation of L-Ala-gamma-D-Glu and Dap. Has weak activity with L-Ala-gamma-D-Glu-L-Lys, MurNAc-tripeptide and gamma-D-Glu-meso-Dap. Cannot hydrolyze murein tetrapeptide. This chain is Murein peptide amidase A, found in Vibrio campbellii (strain ATCC BAA-1116).